A 377-amino-acid chain; its full sequence is Queuine tRNA-ribosyltransferase (377 aa).

D89 serves as the catalytic Proton acceptor. Residues 89 to 93, D143, Q187, and G214 each bind substrate; that span reads DSGGF. Residues 245–251 are RNA binding; it reads GVGKPED. The active-site Nucleophile is the D264. The segment at 269–273 is RNA binding; important for wobble base 34 recognition; it reads TRNAR. Zn(2+) is bound by residues C302, C304, C307, and H333.

This sequence belongs to the queuine tRNA-ribosyltransferase family. In terms of assembly, homodimer. Within each dimer, one monomer is responsible for RNA recognition and catalysis, while the other monomer binds to the replacement base PreQ1. Zn(2+) is required as a cofactor.

It catalyses the reaction 7-aminomethyl-7-carbaguanine + guanosine(34) in tRNA = 7-aminomethyl-7-carbaguanosine(34) in tRNA + guanine. The protein operates within tRNA modification; tRNA-queuosine biosynthesis. Its function is as follows. Catalyzes the base-exchange of a guanine (G) residue with the queuine precursor 7-aminomethyl-7-deazaguanine (PreQ1) at position 34 (anticodon wobble position) in tRNAs with GU(N) anticodons (tRNA-Asp, -Asn, -His and -Tyr). Catalysis occurs through a double-displacement mechanism. The nucleophile active site attacks the C1' of nucleotide 34 to detach the guanine base from the RNA, forming a covalent enzyme-RNA intermediate. The proton acceptor active site deprotonates the incoming PreQ1, allowing a nucleophilic attack on the C1' of the ribose to form the product. After dissociation, two additional enzymatic reactions on the tRNA convert PreQ1 to queuine (Q), resulting in the hypermodified nucleoside queuosine (7-(((4,5-cis-dihydroxy-2-cyclopenten-1-yl)amino)methyl)-7-deazaguanosine). The chain is Queuine tRNA-ribosyltransferase from Shewanella denitrificans (strain OS217 / ATCC BAA-1090 / DSM 15013).